Here is a 397-residue protein sequence, read N- to C-terminus: Acetate kinase (397 aa).

Residue asparagine 8 coordinates Mg(2+). Lysine 15 is a binding site for ATP. Position 89 (arginine 89) interacts with substrate. Aspartate 146 acts as the Proton donor/acceptor in catalysis. Residues 206–210, 280–282, and 328–332 each bind ATP; these read HLGNG, DMR, and GVGEN. Glutamate 382 contributes to the Mg(2+) binding site.

The protein belongs to the acetokinase family. Homodimer. Mg(2+) serves as cofactor. Mn(2+) is required as a cofactor.

The protein resides in the cytoplasm. The enzyme catalyses acetate + ATP = acetyl phosphate + ADP. It participates in metabolic intermediate biosynthesis; acetyl-CoA biosynthesis; acetyl-CoA from acetate: step 1/2. Catalyzes the formation of acetyl phosphate from acetate and ATP. Can also catalyze the reverse reaction. The protein is Acetate kinase of Leifsonia xyli subsp. xyli (strain CTCB07).